We begin with the raw amino-acid sequence, 609 residues long: Zinc metalloproteinase/disintegrin-like HR1a (609 aa).

A signal peptide spans 1–20 (MIQVLLVTICLAVFPYQGSS). Positions 21–190 (IILGSGNVND…KKASKLVVTA (170 aa)) are excised as a propeptide. In terms of domain architecture, Peptidase M12B spans 200 to 396 (RFIELVIVAD…DEPQCILNEP (197 aa)). 2 residues coordinate Ca(2+): Glu-203 and Asp-287. Asn-298 is a glycosylation site (N-linked (GlcNAc...) asparagine). Cystine bridges form between Cys-311/Cys-391, Cys-351/Cys-375, and Cys-353/Cys-358. His-336 contributes to the Zn(2+) binding site. Glu-337 is a catalytic residue. Positions 340 and 346 each coordinate Zn(2+). Asn-350 is a glycosylation site (N-linked (GlcNAc...) asparagine). A glycan (N-linked (GlcNAc...) asparagine) is linked at Asn-374. Residues Cys-391 and Asn-394 each coordinate Ca(2+). A propeptide spanning residues 397 to 400 (LRTD) is cleaved from the precursor. The Disintegrin domain occupies 404–490 (PPVCGNELLE…DCPTDRFHRN (87 aa)). Residues Val-406, Asn-409, Leu-411, Glu-413, Glu-416, and Asp-419 each contribute to the Ca(2+) site. Intrachain disulfides connect Cys-407-Cys-426, Cys-407-Cys-436, Cys-418-Cys-431, Cys-418-Cys-436, Cys-420-Cys-426, Cys-430-Cys-453, Cys-444-Cys-450, Cys-449-Cys-475, Cys-462-Cys-482, Cys-469-Cys-494, Cys-469-Cys-501, Cys-494-Cys-506, Cys-501-Cys-506, Cys-513-Cys-528, Cys-513-Cys-563, Cys-528-Cys-571, Cys-541-Cys-551, Cys-551-Cys-558, Cys-558-Cys-597, Cys-563-Cys-571, Cys-591-Cys-602, and Cys-597-Cys-602. A D/ECD-tripeptide motif is present at residues 468-470 (ECD). Asp-470, Glu-473, and Asp-485 together coordinate Ca(2+). N-linked (GlcNAc...) asparagine glycosylation occurs at Asn-520.

The protein belongs to the venom metalloproteinase (M12B) family. P-III subfamily. P-IIIb sub-subfamily. In terms of assembly, monomer. Requires Zn(2+) as cofactor. Expressed by the venom gland.

Its subcellular location is the secreted. In terms of biological role, zinc protease that induces hemorrhage and has proteolytic activity. Has preference for Ala, His, Pro, Met, and Tyr at the P1 position, in descending order (in vitro). Predominantly prefers Val and Asp at the P3 and P2 positions, respectively. Its function is as follows. Inhibits platelet aggregation induced by ADP, thrombin, platelet-activating factor and collagen. Acts by inhibiting fibrinogen interaction with platelet receptors alpha-IIb/beta-3 (ITGA2B/ITGB3). In Protobothrops flavoviridis (Habu), this protein is Zinc metalloproteinase/disintegrin-like HR1a.